A 683-amino-acid polypeptide reads, in one-letter code: Zinc finger protein 510 (683 aa).

The region spanning Val46–Pro117 is the KRAB domain. The segment at Phe254–His276 adopts a C2H2-type 1; degenerate zinc-finger fold. 9 C2H2-type zinc fingers span residues Tyr404 to His426, Phe432 to His454, Tyr460 to His482, Tyr488 to His510, Phe516 to His538, Tyr544 to His566, Phe572 to His594, Phe600 to His622, and Phe628 to His650.

Belongs to the krueppel C2H2-type zinc-finger protein family.

Its subcellular location is the nucleus. Its function is as follows. May be involved in transcriptional regulation. The polypeptide is Zinc finger protein 510 (ZNF510) (Homo sapiens (Human)).